Consider the following 704-residue polypeptide: Elongation factor G (704 aa).

The 281-residue stretch at N10–L290 folds into the tr-type G domain. Residues A19–T26, D83–H87, and N137–D140 contribute to the GTP site.

This sequence belongs to the TRAFAC class translation factor GTPase superfamily. Classic translation factor GTPase family. EF-G/EF-2 subfamily.

Its subcellular location is the cytoplasm. In terms of biological role, catalyzes the GTP-dependent ribosomal translocation step during translation elongation. During this step, the ribosome changes from the pre-translocational (PRE) to the post-translocational (POST) state as the newly formed A-site-bound peptidyl-tRNA and P-site-bound deacylated tRNA move to the P and E sites, respectively. Catalyzes the coordinated movement of the two tRNA molecules, the mRNA and conformational changes in the ribosome. The sequence is that of Elongation factor G from Clavibacter michiganensis subsp. michiganensis (strain NCPPB 382).